Here is a 688-residue protein sequence, read N- to C-terminus: Glycine--tRNA ligase beta subunit (688 aa).

The protein belongs to the class-II aminoacyl-tRNA synthetase family. Tetramer of two alpha and two beta subunits.

The protein localises to the cytoplasm. The catalysed reaction is tRNA(Gly) + glycine + ATP = glycyl-tRNA(Gly) + AMP + diphosphate. The protein is Glycine--tRNA ligase beta subunit of Clostridioides difficile (strain 630) (Peptoclostridium difficile).